The following is a 728-amino-acid chain: 1,4-alpha-glucan branching enzyme GlgB (728 aa).

The Nucleophile role is filled by D405. E458 (proton donor) is an active-site residue.

Belongs to the glycosyl hydrolase 13 family. GlgB subfamily. Monomer.

The catalysed reaction is Transfers a segment of a (1-&gt;4)-alpha-D-glucan chain to a primary hydroxy group in a similar glucan chain.. Its pathway is glycan biosynthesis; glycogen biosynthesis. Its function is as follows. Catalyzes the formation of the alpha-1,6-glucosidic linkages in glycogen by scission of a 1,4-alpha-linked oligosaccharide from growing alpha-1,4-glucan chains and the subsequent attachment of the oligosaccharide to the alpha-1,6 position. This chain is 1,4-alpha-glucan branching enzyme GlgB, found in Salmonella typhi.